The primary structure comprises 288 residues: Bifunctional protein FolD (288 aa).

Residues glycine 166–serine 168, serine 191, and isoleucine 232 contribute to the NADP(+) site.

It belongs to the tetrahydrofolate dehydrogenase/cyclohydrolase family. As to quaternary structure, homodimer.

It catalyses the reaction (6R)-5,10-methylene-5,6,7,8-tetrahydrofolate + NADP(+) = (6R)-5,10-methenyltetrahydrofolate + NADPH. It carries out the reaction (6R)-5,10-methenyltetrahydrofolate + H2O = (6R)-10-formyltetrahydrofolate + H(+). It participates in one-carbon metabolism; tetrahydrofolate interconversion. In terms of biological role, catalyzes the oxidation of 5,10-methylenetetrahydrofolate to 5,10-methenyltetrahydrofolate and then the hydrolysis of 5,10-methenyltetrahydrofolate to 10-formyltetrahydrofolate. In Rickettsia rickettsii (strain Iowa), this protein is Bifunctional protein FolD.